The primary structure comprises 321 residues: MVHHNVTIIGSGPAAHTAAIYLSRAEIKPTLYEGMLANGTAAGGQLTTTTDVENFPGFPKGINGTELMDQMREQSVRFGTDIITETISKCDLSSRPFKLWTEWNEDSEPITTDAVVIATGASAKRMHLPGEDTYWQQGISACAVCDGAVPIFRNKPLAVVGGGDSACEEALFLTKYGSKVYLLVRRDQLRASNIMQKRVQNNDKLEILWNSEAKEAKGDGKLLQNISVYNNKTKETKDLPVNGLFYAIGHIPATQIFAKQLETDDQNYILTKPGTAETSIPGVFAAGDVQDKRYRQAITSAGTGCMAALDCEKFLSEEEAK.

FAD-binding positions include 11-14, 40-41, Gln-45, Asn-54, Cys-145, Asp-288, and 295-297; these read SGPA, TA, and RQA. An intrachain disulfide couples Cys-142 to Cys-145.

This sequence belongs to the class-II pyridine nucleotide-disulfide oxidoreductase family. In terms of assembly, homodimer. Requires FAD as cofactor.

It localises to the cytoplasm. The catalysed reaction is [thioredoxin]-dithiol + NADP(+) = [thioredoxin]-disulfide + NADPH + H(+). This Debaryomyces hansenii (strain ATCC 36239 / CBS 767 / BCRC 21394 / JCM 1990 / NBRC 0083 / IGC 2968) (Yeast) protein is Thioredoxin reductase (TRR1).